A 292-amino-acid chain; its full sequence is 4-hydroxy-tetrahydrodipicolinate synthase (292 aa).

Thr45 is a pyruvate binding site. The active-site Proton donor/acceptor is the Tyr133. Lys162 serves as the catalytic Schiff-base intermediate with substrate. Ile204 is a binding site for pyruvate.

This sequence belongs to the DapA family. In terms of assembly, homotetramer; dimer of dimers.

It is found in the cytoplasm. The catalysed reaction is L-aspartate 4-semialdehyde + pyruvate = (2S,4S)-4-hydroxy-2,3,4,5-tetrahydrodipicolinate + H2O + H(+). It participates in amino-acid biosynthesis; L-lysine biosynthesis via DAP pathway; (S)-tetrahydrodipicolinate from L-aspartate: step 3/4. Functionally, catalyzes the condensation of (S)-aspartate-beta-semialdehyde [(S)-ASA] and pyruvate to 4-hydroxy-tetrahydrodipicolinate (HTPA). This Nitratidesulfovibrio vulgaris (strain DSM 19637 / Miyazaki F) (Desulfovibrio vulgaris) protein is 4-hydroxy-tetrahydrodipicolinate synthase.